Here is an 833-residue protein sequence, read N- to C-terminus: Patatin-like phospholipase domain-containing protein SNOG_00918 (833 aa).

2 disordered regions span residues 1–20 and 49–71; these read MTDV…SAFD and HLSP…SANN. A helical membrane pass occupies residues 108–128; the sequence is WPLLVVVLGWLLFLSIAYVFT. The PNPLA domain occupies 301–457; the sequence is LCLSGGATFA…RTDIPLKALN (157 aa). The GXSXG signature appears at 332–336; it reads GTSGG. Ser-334 acts as the Nucleophile in catalysis. Asp-444 (proton acceptor) is an active-site residue. 2 disordered regions span residues 630–657 and 680–833; these read TKSK…FSRP and LRTD…GKGL. A compositionally biased stretch (low complexity) spans 644-655; that stretch reads SGSESSSSADFS. A compositionally biased stretch (polar residues) spans 689–707; the sequence is DTPNSPSLSARLTGWWNTK. Basic and acidic residues-rich tracts occupy residues 740 to 750, 759 to 769, and 782 to 794; these read RPPKEVRDLQA, RNSDFLEEIRR, and DEGR…RGDV. Positions 809–819 are enriched in acidic residues; the sequence is EFGDNEGDGEE.

Belongs to the PLPL family.

It is found in the membrane. Its function is as follows. Probable lipid hydrolase. This Phaeosphaeria nodorum (strain SN15 / ATCC MYA-4574 / FGSC 10173) (Glume blotch fungus) protein is Patatin-like phospholipase domain-containing protein SNOG_00918.